A 478-amino-acid polypeptide reads, in one-letter code: Zinc metalloproteinase/disintegrin (478 aa).

A signal peptide spans 1-20 (MIQVLLVTICLAAFPYQGSS). The propeptide occupies 21–187 (IILESGNVND…PIKKASHLNL (167 aa)). A Peptidase M12B domain is found at 193–389 (RYVEIVIVVD…QKPQCILKKP (197 aa)). Disulfide bonds link Cys-304–Cys-384, Cys-344–Cys-368, and Cys-346–Cys-351. His-329 serves as a coordination point for Zn(2+). Glu-330 is a catalytic residue. Zn(2+)-binding residues include His-333 and His-339. A propeptide spanning residues 390–408 (LRTDTVSTPVSGNELLEAR) is cleaved from the precursor. The Disintegrin domain maps to 397 to 478 (TPVSGNELLE…ADCPRNVLYG (82 aa)). 6 disulfide bridges follow: Cys-411–Cys-420, Cys-413–Cys-421, Cys-426–Cys-440, Cys-434–Cys-464, Cys-439–Cys-443, and Cys-452–Cys-471. Positions 474–478 (NVLYG) are excised as a propeptide.

It belongs to the venom metalloproteinase (M12B) family. P-II subfamily. P-IIa sub-subfamily. Zn(2+) is required as a cofactor. In terms of tissue distribution, expressed by the venom gland.

The protein resides in the secreted. Its function is as follows. Snake venom zinc metalloproteinase that causes hemorrhage by provoking the degradation of the sub-endothelial matrix proteins (fibronectin, laminin, type IV collagen, nidogen, and gelatins). Displays low cytotoxicity. In vitro, inhibits cancer cell migration (human breast cancer cell line MDA-MB-231) with a significant rate after 24 hours of incubation. The polypeptide is Zinc metalloproteinase/disintegrin (MPII) (Crotalus durissus collilineatus (Brazilian rattlesnake)).